The chain runs to 182 residues: Lipoprotein signal peptidase (182 aa).

3 helical membrane passes run 12–32, 68–88, and 91–111; these read VAVF…TKAW, ATWV…VAGV, and VSMK…GNLI. Catalysis depends on residues Asp127 and Asp140. The chain crosses the membrane as a helical span at residues 135 to 155; that stretch reads VGNVADIYLVVAGVVLVILIL.

The protein belongs to the peptidase A8 family.

The protein resides in the cell membrane. It catalyses the reaction Release of signal peptides from bacterial membrane prolipoproteins. Hydrolyzes -Xaa-Yaa-Zaa-|-(S,diacylglyceryl)Cys-, in which Xaa is hydrophobic (preferably Leu), and Yaa (Ala or Ser) and Zaa (Gly or Ala) have small, neutral side chains.. It functions in the pathway protein modification; lipoprotein biosynthesis (signal peptide cleavage). In terms of biological role, this protein specifically catalyzes the removal of signal peptides from prolipoproteins. This is Lipoprotein signal peptidase from Bifidobacterium longum (strain DJO10A).